A 207-amino-acid chain; its full sequence is Protein-L-isoaspartate O-methyltransferase (207 aa).

Serine 56 is an active-site residue.

The protein belongs to the methyltransferase superfamily. L-isoaspartyl/D-aspartyl protein methyltransferase family.

The protein localises to the cytoplasm. The catalysed reaction is [protein]-L-isoaspartate + S-adenosyl-L-methionine = [protein]-L-isoaspartate alpha-methyl ester + S-adenosyl-L-homocysteine. Functionally, catalyzes the methyl esterification of L-isoaspartyl residues in peptides and proteins that result from spontaneous decomposition of normal L-aspartyl and L-asparaginyl residues. It plays a role in the repair and/or degradation of damaged proteins. In Pyrobaculum islandicum (strain DSM 4184 / JCM 9189 / GEO3), this protein is Protein-L-isoaspartate O-methyltransferase.